A 347-amino-acid chain; its full sequence is Phenylalanine--tRNA ligase alpha subunit (347 aa).

Glutamate 262 serves as a coordination point for Mg(2+).

This sequence belongs to the class-II aminoacyl-tRNA synthetase family. Phe-tRNA synthetase alpha subunit type 1 subfamily. As to quaternary structure, tetramer of two alpha and two beta subunits. The cofactor is Mg(2+).

It localises to the cytoplasm. It catalyses the reaction tRNA(Phe) + L-phenylalanine + ATP = L-phenylalanyl-tRNA(Phe) + AMP + diphosphate + H(+). In Roseiflexus castenholzii (strain DSM 13941 / HLO8), this protein is Phenylalanine--tRNA ligase alpha subunit.